A 423-amino-acid polypeptide reads, in one-letter code: MTKNYSARFVSRLTRDTLALILAGGRGSRLKNLTAWRAKPAVPIGGKFRIIDFPLSNCVNSGVRRICVLTQYKAHSLVRHIQQGWGFMRGYLGEFVELMPASQRIEDSWYAGTADAVYQNLDIVRSHNPEYVLILAGDHVYKMDYGDMLAYHVEREADMTVGCIHVPLKEAKAFGVMSVDENFRVTEFTEKPEHPQPSPGRSDETLASMGIYVFNAAFLYEQLIKNADAFNSSHDFGKDIIPSILRSHYRVIAFPFSDVQGGDPGYWRDVGTVDAFWNANLELIGVSPELNLYDEDWPIWTYQAQLPPAKFIFDNEDRRGMAVDSMVSGGCIIAGAWIGHSLLFSNVWVQSHTEVASSVILPDVKIGKHCHIRKAILDKGCNVPDGTVIGEDLEEDKRRFYVTEEGVVLVTPEMLGQKYRYIR.

Alpha-D-glucose 1-phosphate-binding positions include Tyr-110, Gly-175, 190–191 (EK), and Ser-208.

It belongs to the bacterial/plant glucose-1-phosphate adenylyltransferase family. In terms of assembly, homotetramer.

It catalyses the reaction alpha-D-glucose 1-phosphate + ATP + H(+) = ADP-alpha-D-glucose + diphosphate. The protein operates within glycan biosynthesis; glycogen biosynthesis. In terms of biological role, involved in the biosynthesis of ADP-glucose, a building block required for the elongation reactions to produce glycogen. Catalyzes the reaction between ATP and alpha-D-glucose 1-phosphate (G1P) to produce pyrophosphate and ADP-Glc. This is Glucose-1-phosphate adenylyltransferase from Nitrosococcus oceani (strain ATCC 19707 / BCRC 17464 / JCM 30415 / NCIMB 11848 / C-107).